Here is a 161-residue protein sequence, read N- to C-terminus: Dihydrofolate reductase (161 aa).

Positions 2 to 161 (NISLIAAISK…YNYSFEILSR (160 aa)) constitute a DHFR domain. Residue 6-8 (IAA) participates in substrate binding. Residues 7–8 (AA) and 15–20 (IGYKNK) each bind NADP(+). Substrate is bound at residue Asp28. 44–47 (GRLT) contacts NADP(+). Residue Arg59 participates in substrate binding. NADP(+)-binding positions include 64-66 (ISS) and 96-101 (IGGAKI). Thr115 lines the substrate pocket.

The protein belongs to the dihydrofolate reductase family.

The enzyme catalyses (6S)-5,6,7,8-tetrahydrofolate + NADP(+) = 7,8-dihydrofolate + NADPH + H(+). It participates in cofactor biosynthesis; tetrahydrofolate biosynthesis; 5,6,7,8-tetrahydrofolate from 7,8-dihydrofolate: step 1/1. Key enzyme in folate metabolism. Catalyzes an essential reaction for de novo glycine and purine synthesis, and for DNA precursor synthesis. The protein is Dihydrofolate reductase (folA) of Buchnera aphidicola subsp. Acyrthosiphon pisum (strain APS) (Acyrthosiphon pisum symbiotic bacterium).